The following is a 286-amino-acid chain: 33 kDa chaperonin (286 aa).

Intrachain disulfides connect cysteine 233–cysteine 235 and cysteine 267–cysteine 270.

This sequence belongs to the HSP33 family. Post-translationally, under oxidizing conditions two disulfide bonds are formed involving the reactive cysteines. Under reducing conditions zinc is bound to the reactive cysteines and the protein is inactive.

It is found in the cytoplasm. Its function is as follows. Redox regulated molecular chaperone. Protects both thermally unfolding and oxidatively damaged proteins from irreversible aggregation. Plays an important role in the bacterial defense system toward oxidative stress. The polypeptide is 33 kDa chaperonin (Histophilus somni (strain 2336) (Haemophilus somnus)).